Consider the following 645-residue polypeptide: ATP-dependent zinc metalloprotease FtsH (645 aa).

The Cytoplasmic segment spans residues methionine 1–lysine 8. Residues isoleucine 9–serine 29 traverse the membrane as a helical segment. Topologically, residues glutamine 30–tryptophan 105 are periplasmic. The helical transmembrane segment at proline 106–isoleucine 126 threads the bilayer. The Cytoplasmic portion of the chain corresponds to arginine 127–glutamine 645. Glycine 199 to threonine 206 lines the ATP pocket. Histidine 423 contacts Zn(2+). Glutamate 424 is an active-site residue. Zn(2+)-binding residues include histidine 427 and aspartate 500. Residues serine 612 to glutamine 645 are disordered. Basic and acidic residues predominate over residues glycine 627–leucine 637.

It in the central section; belongs to the AAA ATPase family. The protein in the C-terminal section; belongs to the peptidase M41 family. Homohexamer. The cofactor is Zn(2+).

The protein localises to the cell inner membrane. Acts as a processive, ATP-dependent zinc metallopeptidase for both cytoplasmic and membrane proteins. Plays a role in the quality control of integral membrane proteins. The protein is ATP-dependent zinc metalloprotease FtsH of Paraburkholderia phymatum (strain DSM 17167 / CIP 108236 / LMG 21445 / STM815) (Burkholderia phymatum).